Reading from the N-terminus, the 319-residue chain is NADH-ubiquinone oxidoreductase chain 1 (319 aa).

A run of 8 helical transmembrane segments spans residues 3 to 23 (LITL…AMAF), 74 to 94 (LFLL…IPLP), 106 to 126 (ILFI…SGWA), 149 to 169 (TLGL…LTTF), 175 to 195 (AVWL…STLA), 226 to 246 (LFFL…TILF), 254 to 274 (LTIN…FLWV), and 294 to 314 (FLPL…SMAG).

This sequence belongs to the complex I subunit 1 family.

Its subcellular location is the mitochondrion inner membrane. It carries out the reaction a ubiquinone + NADH + 5 H(+)(in) = a ubiquinol + NAD(+) + 4 H(+)(out). Its function is as follows. Core subunit of the mitochondrial membrane respiratory chain NADH dehydrogenase (Complex I) that is believed to belong to the minimal assembly required for catalysis. Complex I functions in the transfer of electrons from NADH to the respiratory chain. The immediate electron acceptor for the enzyme is believed to be ubiquinone. The chain is NADH-ubiquinone oxidoreductase chain 1 (MT-ND1) from Polypterus ornatipinnis (Ornate bichir).